The sequence spans 547 residues: Chaperonin GroEL 1 (547 aa).

ATP is bound by residues 30–33 (TLGP), K51, 87–91 (DGTTT), G415, and D496. The interval 525 to 547 (KPEPKSPAGGPGMGGMGGMDGMM) is disordered. The span at 533-547 (GGPGMGGMGGMDGMM) shows a compositional bias: gly residues.

The protein belongs to the chaperonin (HSP60) family. In terms of assembly, forms a cylinder of 14 subunits composed of two heptameric rings stacked back-to-back. Interacts with the co-chaperonin GroES.

Its subcellular location is the cytoplasm. The enzyme catalyses ATP + H2O + a folded polypeptide = ADP + phosphate + an unfolded polypeptide.. Its function is as follows. Together with its co-chaperonin GroES, plays an essential role in assisting protein folding. The GroEL-GroES system forms a nano-cage that allows encapsulation of the non-native substrate proteins and provides a physical environment optimized to promote and accelerate protein folding. The polypeptide is Chaperonin GroEL 1 (Cereibacter sphaeroides (strain ATCC 17023 / DSM 158 / JCM 6121 / CCUG 31486 / LMG 2827 / NBRC 12203 / NCIMB 8253 / ATH 2.4.1.) (Rhodobacter sphaeroides)).